A 372-amino-acid chain; its full sequence is Tomoregulin-1 (372 aa).

An N-terminal signal peptide occupies residues 1–36; the sequence is MGAQAPLRLPAAPPLAVCGYTSVLLLFAFCLPGSRA. Topologically, residues 37-322 are extracellular; sequence SNQPAGGGGD…VPSRQKLTHV (286 aa). A glycan (N-linked (GlcNAc...) asparagine) is linked at Asn-55. Positions 90-137 constitute a Kazal-like 1 domain; it reads ACQFQCHTNYIPVCGSNGDTYQNECFLRRAACKHQKDITVVARGPCYS. Disulfide bonds link Cys-91–Cys-121, Cys-95–Cys-114, and Cys-103–Cys-135. An N-linked (GlcNAc...) asparagine glycan is attached at Asn-139. The segment at 139-161 is disordered; sequence NGSGSGEGEEEGSGAGAHRKHSK. The Kazal-like 2 domain maps to 181–229; it reads VCNIDCSGYSFNPVCASDGSSYNNPCFVREASCIKQEQIDIRHLGHCTD. 6 disulfide bridges follow: Cys-182/Cys-213, Cys-186/Cys-206, Cys-195/Cys-227, Cys-267/Cys-280, Cys-275/Cys-291, and Cys-293/Cys-302. An EGF-like domain is found at 263–303; the sequence is SHMPCPENLNGYCIHGKCEFIYSTQKASCRCESGYTGQHCE. The chain crosses the membrane as a helical span at residues 323–343; it reads LIAAIIGAVQIAIIVAIVMCI. The Cytoplasmic segment spans residues 344-372; that stretch reads TRKCPKNNRGRRQKQNLGHFTSDTSSRMV. The interval 351-372 is disordered; that stretch reads NRGRRQKQNLGHFTSDTSSRMV. Residues 358 to 372 show a composition bias toward polar residues; sequence QNLGHFTSDTSSRMV.

Belongs to the tomoregulin family. As to quaternary structure, may interact with ST14. In terms of tissue distribution, maily expressed in neurons. Expressed in brain, neurointermediate lobe, pars distalis, pancreas, ovary and testis.

The protein resides in the cell membrane. Its function is as follows. Neuron-specific restriction factor that prevents herpes simplex virus 1 (HHV-1) infection in the brain by blocking viral entry. Also able to restrict herpes simplex virus 2 (HHV-2) infection, although to a lesser extent. Acts by preventing the association between the viral glycoprotein D (gD) and its cell surface receptor NECTIN1, thereby inhibiting fusion of the virus and the cell membrane. Also able to prevent the association between the viral glycoprotein B (gB) and MYH9/NMMHC-IIA and MYH10/NMMHC-IIB receptors. The polypeptide is Tomoregulin-1 (Mus musculus (Mouse)).